A 252-amino-acid chain; its full sequence is Chitooligosaccharide deacetylase (252 aa).

Mg(2+) contacts are provided by histidine 61 and histidine 125.

It belongs to the YdjC deacetylase family. ChbG subfamily. As to quaternary structure, homodimer. Mg(2+) serves as cofactor.

The protein resides in the cytoplasm. The catalysed reaction is N,N'-diacetylchitobiose + H2O = N-acetyl-beta-D-glucosaminyl-(1-&gt;4)-D-glucosamine + acetate. It catalyses the reaction diacetylchitobiose-6'-phosphate + H2O = N'-monoacetylchitobiose-6'-phosphate + acetate. It functions in the pathway glycan degradation; chitin degradation. Involved in the degradation of chitin. ChbG is essential for growth on the acetylated chitooligosaccharides chitobiose and chitotriose but is dispensable for growth on cellobiose and chitosan dimer, the deacetylated form of chitobiose. Deacetylation of chitobiose-6-P and chitotriose-6-P is necessary for both the activation of the chb promoter by the regulatory protein ChbR and the hydrolysis of phosphorylated beta-glucosides by the phospho-beta-glucosidase ChbF. Catalyzes the removal of only one acetyl group from chitobiose-6-P to yield monoacetylchitobiose-6-P, the inducer of ChbR and the substrate of ChbF. The polypeptide is Chitooligosaccharide deacetylase (Salmonella paratyphi A (strain ATCC 9150 / SARB42)).